A 122-amino-acid polypeptide reads, in one-letter code: Large ribosomal subunit protein uL14 (122 aa).

Belongs to the universal ribosomal protein uL14 family. Part of the 50S ribosomal subunit. Forms a cluster with proteins L3 and L19. In the 70S ribosome, L14 and L19 interact and together make contacts with the 16S rRNA in bridges B5 and B8.

Functionally, binds to 23S rRNA. Forms part of two intersubunit bridges in the 70S ribosome. The sequence is that of Large ribosomal subunit protein uL14 from Gluconacetobacter diazotrophicus (strain ATCC 49037 / DSM 5601 / CCUG 37298 / CIP 103539 / LMG 7603 / PAl5).